We begin with the raw amino-acid sequence, 200 residues long: Large ribosomal subunit protein uL4 (200 aa).

Residues 43-72 (RAQKTRAEVSGSGKKPWRQKGTGRARSGDI) form a disordered region.

Belongs to the universal ribosomal protein uL4 family. In terms of assembly, part of the 50S ribosomal subunit.

In terms of biological role, one of the primary rRNA binding proteins, this protein initially binds near the 5'-end of the 23S rRNA. It is important during the early stages of 50S assembly. It makes multiple contacts with different domains of the 23S rRNA in the assembled 50S subunit and ribosome. Its function is as follows. Forms part of the polypeptide exit tunnel. In Haemophilus ducreyi (strain 35000HP / ATCC 700724), this protein is Large ribosomal subunit protein uL4.